The following is a 487-amino-acid chain: Alpha-1,4-L-rhamnosidase (487 aa).

The signal sequence occupies residues 1–30; the sequence is MKNKKRLCHILKYIITCFLFGVIFIIPIQA. The Proton donor role is filled by Glu199.

This sequence belongs to the glycosyl hydrolase 39 family.

The protein resides in the periplasm. Functionally, alpha-rhamnosidase involved in ulvan degradation. Ulvan is the main polysaccharide component of the Ulvales (green seaweed) cell wall. It is composed of disaccharide building blocks comprising 3-sulfated rhamnose (Rha3S) linked to D-glucuronic acid (GlcA), L-iduronic acid (IduA), or D-xylose (Xyl). Endo-acting alpha-1,4-L-rhamnosidase cleaves rhamnose sections interspersed between xylose residues within the polymer, degrading larger oligomers with consecutive Xyl-Rha3S units that are resistant to the ulvan lyases and producing dimers Xyl-Rha3S and Xyl2S-Rha3S as the smallest products. The sequence is that of Alpha-1,4-L-rhamnosidase from Formosa agariphila (strain DSM 15362 / KCTC 12365 / LMG 23005 / KMM 3901 / M-2Alg 35-1).